The sequence spans 256 residues: Imidazole glycerol phosphate synthase subunit HisF (256 aa).

Active-site residues include aspartate 11 and aspartate 130.

Belongs to the HisA/HisF family. Heterodimer of HisH and HisF.

The protein resides in the cytoplasm. The catalysed reaction is 5-[(5-phospho-1-deoxy-D-ribulos-1-ylimino)methylamino]-1-(5-phospho-beta-D-ribosyl)imidazole-4-carboxamide + L-glutamine = D-erythro-1-(imidazol-4-yl)glycerol 3-phosphate + 5-amino-1-(5-phospho-beta-D-ribosyl)imidazole-4-carboxamide + L-glutamate + H(+). It functions in the pathway amino-acid biosynthesis; L-histidine biosynthesis; L-histidine from 5-phospho-alpha-D-ribose 1-diphosphate: step 5/9. Functionally, IGPS catalyzes the conversion of PRFAR and glutamine to IGP, AICAR and glutamate. The HisF subunit catalyzes the cyclization activity that produces IGP and AICAR from PRFAR using the ammonia provided by the HisH subunit. The protein is Imidazole glycerol phosphate synthase subunit HisF of Cupriavidus metallidurans (strain ATCC 43123 / DSM 2839 / NBRC 102507 / CH34) (Ralstonia metallidurans).